We begin with the raw amino-acid sequence, 72 residues long: Large ribosomal subunit protein bL31 (72 aa).

This sequence belongs to the bacterial ribosomal protein bL31 family. Type A subfamily. Part of the 50S ribosomal subunit.

In terms of biological role, binds the 23S rRNA. This is Large ribosomal subunit protein bL31 from Deinococcus geothermalis (strain DSM 11300 / CIP 105573 / AG-3a).